A 96-amino-acid polypeptide reads, in one-letter code: Putative septation protein SpoVG (96 aa).

Belongs to the SpoVG family.

Its function is as follows. Could be involved in septation. The chain is Putative septation protein SpoVG from Phytoplasma australiense.